Consider the following 553-residue polypeptide: Peroxiredoxin-2A (553 aa).

Residues 4–160 (IDVGDFVPDG…LMKMTTTTMS (157 aa)) enclose the Thioredoxin domain. Catalysis depends on C51, which acts as the Cysteine sulfenic acid (-SOH) intermediate. The 46-residue stretch at 156–201 (TTTMSNLPTDLLEEIISRVPRKYMRAVRLTCKRWNGMFKSQSFTKM) folds into the F-box domain.

The protein belongs to the peroxiredoxin family. Prx5 subfamily. Monomer.

The catalysed reaction is [glutaredoxin]-dithiol + a hydroperoxide = [glutaredoxin]-disulfide + an alcohol + H2O. Its function is as follows. Thiol-specific peroxidase that catalyzes the reduction of hydrogen peroxide and organic hydroperoxides to water and alcohols, respectively. Plays a role in cell protection against oxidative stress by detoxifying peroxides. May be involved in intracellular redox signaling. In Arabidopsis thaliana (Mouse-ear cress), this protein is Peroxiredoxin-2A (PRXIIA).